Consider the following 172-residue polypeptide: uncharacterized protein (172 aa).

The next 4 helical transmembrane spans lie at 46 to 66 (MFSI…FLYP), 76 to 96 (LLSL…VGLF), 104 to 124 (WKFL…LGWS), and 129 to 149 (FFYA…FTEI).

The protein localises to the endoplasmic reticulum membrane. This is an uncharacterized protein from Schizosaccharomyces pombe (strain 972 / ATCC 24843) (Fission yeast).